Reading from the N-terminus, the 340-residue chain is Ras association domain-containing protein 1 (340 aa).

S2 carries the N-acetylserine modification. S2 carries the post-translational modification Phosphoserine. A mediates interaction with E4F1 region spans residues 2–115 (SAEPELIELR…DLGWDSALER (114 aa)). A Phorbol-ester/DAG-type zinc finger spans residues 51 to 101 (GHRFQPAGPTTHTWCDLCGDFIWGVVRKGLQCAHCKFTCHYRCRALVCLDC). Residues 175–185 (SVPSSKKPPSL) show a composition bias toward low complexity. The disordered stretch occupies residues 175–196 (SVPSSKKPPSLQDARRGTGRST). Positions 194–288 (RSTAVKRRTS…LSFVLKENDS (95 aa)) constitute a Ras-associating domain. Residues 290–337 (EVNWDAFSMPELHNFLRILQREEEEHLRQILQKYSRCRQKIQEALHAC) enclose the SARAH domain. Residues 311–314 (EEEE) form an MOAP1-binding region.

Interacts with MAP1S and XPA. Binds to the N-terminal of CDC20 during prometaphase. Binds to STK3/MST2 and STK4/MST1. Recruited to the TNFRSF1A and TNFRSF10A complexes in response to their respective cognate ligand, after internalization. Can self-associate. Part of a complex with MDM2, DAXX, RASSF1 and USP7. As to quaternary structure, interacts with MOAP1 and E4F1. Interacts with RSSF5 and probably associates with HRAS via a RSSF1 isoform A-RSSF5 heterodimer. Interacts (via C-terminus) with DAXX (via N-terminus); the interaction is independent of MDM2 and TP53. Interacts (via N-terminus) with MDM2 (via C-terminus); the interaction is independent of TP53. Interacts with RAB39A. Interacts with RAB39B; the interaction is weak. In terms of assembly, interacts with ECM2. Interacts with RAB39B; the interaction is strong. Does not interact with RAB39A.

Its subcellular location is the cytoplasm. It localises to the cytoskeleton. The protein resides in the microtubule organizing center. The protein localises to the centrosome. It is found in the spindle. Its subcellular location is the spindle pole. It localises to the nucleus. In terms of biological role, potential tumor suppressor. Required for death receptor-dependent apoptosis. Mediates activation of Mediates activation of STK3/MST2 and STK4/MST1 during Fas-induced apoptosis by preventing their dephosphorylation. When associated with MOAP1, promotes BAX conformational change and translocation to mitochondrial membranes in response to TNF and TNFSF10 stimulation. Isoform A interacts with CDC20, an activator of the anaphase-promoting complex, APC, resulting in the inhibition of APC activity and mitotic progression. Inhibits proliferation by negatively regulating cell cycle progression at the level of G1/S-phase transition by regulating accumulation of cyclin D1 protein. Isoform C has been shown not to perform these roles, no function has been identified for this isoform. Isoform A disrupts interactions among MDM2, DAXX and USP7, thus contributing to the efficient activation of TP53 by promoting MDM2 self-ubiquitination in cell-cycle checkpoint control in response to DNA damage. This Mus musculus (Mouse) protein is Ras association domain-containing protein 1.